The chain runs to 122 residues: Large ribosomal subunit protein uL14c (122 aa).

Belongs to the universal ribosomal protein uL14 family. In terms of assembly, part of the 50S ribosomal subunit.

It localises to the plastid. Its function is as follows. Binds to 23S rRNA. The chain is Large ribosomal subunit protein uL14c from Cuscuta reflexa (Southern Asian dodder).